Here is a 676-residue protein sequence, read N- to C-terminus: Envelope glycoprotein (676 aa).

An N-terminal signal peptide occupies residues 1 to 32 (MGGLSLLQLPRDKFRKSSFFVWVIILFQKAFS). The tract at residues 33 to 185 (MPLGVVTNST…FAEGVIAFLI (153 aa)) is receptor binding. Topologically, residues 33 to 650 (MPLGVVTNST…DDNWWTGWRQ (618 aa)) are extracellular. A glycan (N-linked (GlcNAc...) asparagine; by host) is linked at N40. Intrachain disulfides connect C53–C609, C108–C135, C121–C147, C511–C556, and C601–C608. N-linked (GlcNAc...) asparagine; by host glycosylation is found at N204, N208, N238, N257, N268, N296, N314, and N366. The mucin-like region stretch occupies residues 305–485 (ELSFEALSLN…STSNGLITST (181 aa)). Disordered regions lie at residues 337 to 373 (RKYSDLVPKNSPGMVPLHIPEGETTLPSQNSTEGRRV) and 404 to 461 (RPSS…LTTP). 2 stretches are compositionally biased toward low complexity: residues 405-428 (PSSSQIPSSSPTTAPSPEAQTPTT) and 449-461 (PGPTTEAPTLTTP). A glycan (N-linked (GlcNAc...) asparagine; by host) is linked at N463. The segment at 524-539 (HNAAGIAWIPYFGPGA) is fusion peptide. Positions 554–595 (LVCGLRQLANETTQALQLFLRATTELRTYTILNRKAIDFLLR) form a coiled coil. N-linked (GlcNAc...) asparagine; by host glycosylation is present at N563. Residues 615–634 (WTKNITDKINQIIHDFIDNP) are a coiled coil. N618 carries N-linked (GlcNAc...) asparagine; by host glycosylation. Residues 651 to 671 (WIPAGIGITGIIIAIIALLCV) traverse the membrane as a helical segment. 2 S-palmitoyl cysteine; by host lipidation sites follow: C670 and C672. Topologically, residues 672–676 (CKLLC) are cytoplasmic.

This sequence belongs to the filoviruses glycoprotein family. As to quaternary structure, homotrimer; each monomer consists of a GP1 and a GP2 subunit linked by disulfide bonds. The resulting peplomers (GP1,2) protrude from the virus surface as spikes. Interacts with host integrin alpha-V/ITGAV. Interacts with host CLEC10A. Binds also to host CD209 and CLEC4M/DC-SIGN(R). Interacts with host FOLR1. Interacts with BST2; this interaction inhibits the antiviral effect of BST2 and this allows viral release from infected cells. Interacts with host FCN1; this interaction enhances viral entry. Interacts with host TLR4; this interaction induces cell death in T-lymphocytes or proinflammatory cytokines and SOCS1 production in monocytes. Interacts with host entry receptor NPC1. In terms of assembly, GP1 and GP2delta are part of GP1,2delta soluble complexes released by ectodomain shedding. In terms of processing, N-glycosylated. Post-translationally, O-glycosylated in the mucin-like region. Palmitoylation of GP2 is not required for its function. In terms of processing, specific enzymatic cleavages in vivo yield mature proteins. The precursor is processed into GP1 and GP2 by host cell furin in the trans Golgi, and maybe by other host proteases, to yield the mature GP1 and GP2 proteins. The cleavage site corresponds to the furin optimal cleavage sequence [KR]-X-[KR]-R. This cleavage does not seem to be required for function. After the internalization of the virus into cell endosomes, GP1 C-terminus is removed by the endosomal proteases cathepsin B, cathepsin L, or both, leaving a 19-kDa N-terminal fragment which is further digested by cathepsin B. Proteolytic processing of GP1,2 by host ADAM17 can remove the transmembrane anchor of GP2 and leads to shedding of complexes consisting in GP1 and truncated GP2 (GP1,2delta).

The protein localises to the virion membrane. Its subcellular location is the host cell membrane. It localises to the secreted. Functionally, trimeric GP1,2 complexes form the virion surface spikes and mediate the viral entry processes, with GP1 acting as the receptor-binding subunit and GP2 as the membrane fusion subunit. At later times of infection, down-regulates the expression of various host cell surface molecules that are essential for immune surveillance and cell adhesion. Down-modulates several integrins including ITGA1, ITGA2, ITGA3, ITGA4, ITGA5, ITGA6, ITGAV and ITGB1. This decrease in cell adhesion molecules may lead to cell detachment, contributing to the disruption of blood vessel integrity and hemorrhages developed during infection (cytotoxicity). Interacts with host TLR4 and thereby stimulates the differentiation and activation of monocytes leading to bystander death of T-lymphocytes. Down-regulates as well the function of host natural killer cells. Counteracts the antiviral effect of host BST2/tetherin that restricts release of progeny virions from infected cells. However, cooperates with VP40 and host BST2 to activate canonical NF-kappa-B pathway in a manner dependent on neddylation. Its function is as follows. Functions as a decoy for anti-GP1,2 antibodies thereby contributing to viral immune evasion. Interacts and activates host macrophages and dendritic cells inducing up-regulation of cytokine transcription. This effect is mediated throught activation of host TLR4. In terms of biological role, responsible for binding to the receptor(s) on target cells. Interacts with CD209/DC-SIGN and CLEC4M/DC-SIGNR which act as cofactors for virus entry into dendritic cells (DCs) and endothelial cells. Binding to the macrophage specific lectin CLEC10A also seems to enhance virus infectivity. Interaction with FOLR1/folate receptor alpha may be a cofactor for virus entry in some cell types, although results are contradictory. Members of the Tyro3 receptor tyrosine kinase family also seem to be cell entry factors in filovirus infection. Once attached, the virions are internalized through clathrin-dependent endocytosis and/or macropinocytosis. After internalization of the virus into the endosomes of the host cell, proteolysis of GP1 by two cysteine proteases, CTSB/cathepsin B and CTSL/cathepsin L removes the glycan cap and allows GP1 binding to the host entry receptor NPC1. NPC1-binding, Ca(2+) and acidic pH induce a conformational change of GP2, which unmasks its fusion peptide and permit membranes fusion. Acts as a class I viral fusion protein. Under the current model, the protein has at least 3 conformational states: pre-fusion native state, pre-hairpin intermediate state, and post-fusion hairpin state. During viral and target cell membrane fusion, the coiled coil regions (heptad repeats) assume a trimer-of-hairpins structure, positioning the fusion peptide in close proximity to the C-terminal region of the ectodomain. The formation of this structure appears to drive apposition and subsequent fusion of viral and target cell membranes. Responsible for penetration of the virus into the cell cytoplasm by mediating the fusion of the membrane of the endocytosed virus particle with the endosomal membrane. Low pH in endosomes induces an irreversible conformational change in GP2, releasing the fusion hydrophobic peptide. This is Envelope glycoprotein (GP) from Sudan ebolavirus (strain Human/Uganda/Gulu/2000) (SEBOV).